A 263-amino-acid chain; its full sequence is MREAVIAEVSTQLSEVVGVIERHLEPTLLAVHLYGSAVDGGLKPHSDIDLLVTVTVRLDETTRRALINDLLETSASPGESEILRAVEVTIVVHDDIIPWRYPAKRELQFGEWQRNDILAGIFEPATIDIDLAILLTKAREHSVALVGPAAEELFDPVPEQDLFEALNETLTLWNSPPDWAGDERNVVLTLSRIWYSAVTGKIAPKDVAADWAMERLPAQYQPVILEARQAYLGQEEDRLASRADQLEEFVHYVKGEITKVVGK.

It catalyses the reaction streptomycin + ATP = 3''-O-adenylylstreptomycin + diphosphate. The catalysed reaction is spectinomycin + ATP = 9-O-adenylylspectinomycin + diphosphate. Its function is as follows. Mediates bacterial resistance to the antibiotics streptomycin and spectinomycin. This chain is Aminoglycoside (3'') (9) adenylyltransferase, found in Escherichia coli.